The sequence spans 102 residues: Large ribosomal subunit protein uL24 (102 aa).

This sequence belongs to the universal ribosomal protein uL24 family. As to quaternary structure, part of the 50S ribosomal subunit.

One of two assembly initiator proteins, it binds directly to the 5'-end of the 23S rRNA, where it nucleates assembly of the 50S subunit. Functionally, one of the proteins that surrounds the polypeptide exit tunnel on the outside of the subunit. This is Large ribosomal subunit protein uL24 from Burkholderia ambifaria (strain ATCC BAA-244 / DSM 16087 / CCUG 44356 / LMG 19182 / AMMD) (Burkholderia cepacia (strain AMMD)).